The primary structure comprises 178 residues: Interleukin-10 (178 aa).

Residues 1–18 (MHSSALLCYLVFLAGVGA) form the signal peptide. 2 disulfide bridges follow: C30-C126 and C80-C132. N-linked (GlcNAc...) asparagine glycosylation is present at N67. N-linked (GlcNAc...) asparagine glycosylation is present at N134.

The protein belongs to the IL-10 family. Homodimer. Interacts with IL10RA and IL10RB.

The protein resides in the secreted. Functionally, major immune regulatory cytokine that acts on many cells of the immune system where it has profound anti-inflammatory functions, limiting excessive tissue disruption caused by inflammation. Mechanistically, IL10 binds to its heterotetrameric receptor comprising IL10RA and IL10RB leading to JAK1 and STAT2-mediated phosphorylation of STAT3. In turn, STAT3 translocates to the nucleus where it drives expression of anti-inflammatory mediators. Targets antigen-presenting cells (APCs) such as macrophages and monocytes and inhibits their release of pro-inflammatory cytokines including granulocyte-macrophage colony-stimulating factor /GM-CSF, granulocyte colony-stimulating factor/G-CSF, IL-1 alpha, IL-1 beta, IL-6, IL-8 and TNF-alpha. Also interferes with antigen presentation by reducing the expression of MHC-class II and co-stimulatory molecules, thereby inhibiting their ability to induce T cell activation. In addition, controls the inflammatory response of macrophages by reprogramming essential metabolic pathways including mTOR signaling. In Equus caballus (Horse), this protein is Interleukin-10 (IL10).